Reading from the N-terminus, the 204-residue chain is Ras-related protein R-Ras2 (204 aa).

A2 is subject to N-acetylalanine. Residue 21-29 (GGGGVGKSA) coordinates GTP. The Effector region signature appears at 43–51 (YDPTIEDSY). Residues 68–72 (DTAGQ), 127–130 (NKAD), and 157–159 (SAK) each bind GTP. A Phosphoserine modification is found at S186. Residues K192, K194, K196, and K197 are each lipidated (N6-palmitoyl lysine). C199 is lipidated: S-palmitoyl cysteine. C201 carries the cysteine methyl ester modification. A lipid anchor (S-farnesyl cysteine) is attached at C201. A propeptide spans 202-204 (VIF) (removed in mature form).

The protein belongs to the small GTPase superfamily. Ras family. As to quaternary structure, interacts with RASSF5. May be post-translationally modified by both palmitoylation and polyisoprenylation. Post-translationally, fatty-acylation at Lys-192, Lys-194; lys-196 and Lys-197 is required for localization to the plasma membrane and activity. Defatty-acylated by SIRT6, affecting its localization to the plasma membrane. In terms of tissue distribution, ubiquitously present in all tissues examined, with the highest levels in heart, placenta, and skeletal muscle. Moderate levels in lung and liver; low levels in brain, kidney, and pancreas.

It is found in the cell membrane. The protein localises to the golgi apparatus membrane. It catalyses the reaction GTP + H2O = GDP + phosphate + H(+). In terms of biological role, GTP-binding protein with GTPase activity, involved in the regulation of MAPK signaling pathway and thereby controlling multiple cellular processes. Regulates craniofacial development. The protein is Ras-related protein R-Ras2 of Homo sapiens (Human).